The following is a 172-amino-acid chain: Protein-export protein SecB (172 aa).

Residues 152–172 (AQGAEGGNSGIVMPDGSQARH) form a disordered region.

This sequence belongs to the SecB family. In terms of assembly, homotetramer, a dimer of dimers. One homotetramer interacts with 1 SecA dimer.

Its subcellular location is the cytoplasm. One of the proteins required for the normal export of preproteins out of the cell cytoplasm. It is a molecular chaperone that binds to a subset of precursor proteins, maintaining them in a translocation-competent state. It also specifically binds to its receptor SecA. The polypeptide is Protein-export protein SecB (Cupriavidus necator (strain ATCC 17699 / DSM 428 / KCTC 22496 / NCIMB 10442 / H16 / Stanier 337) (Ralstonia eutropha)).